An 80-amino-acid chain; its full sequence is CDC42 small effector protein 1 (80 aa).

2 S-palmitoyl cysteine lipidation sites follow: C10 and C11. The region spanning 30 to 43 is the CRIB domain; sequence IGEPMNFVHLTHIG. The disordered stretch occupies residues 48–80; that stretch reads GAGDGLAMTGAVQEQMRSKGNHRDRPWSNSRAL.

It belongs to the CDC42SE/SPEC family. In terms of assembly, interacts with CDC42 (in GTP-bound form). Interacts weakly with RAC1 and not at all with RHOA.

It is found in the cytoplasm. Its subcellular location is the cytoskeleton. The protein resides in the cell membrane. Its function is as follows. Probably involved in the organization of the actin cytoskeleton by acting downstream of CDC42, inducing actin filament assembly. Alters CDC42-induced cell shape changes. In activated T-cells, may play a role in CDC42-mediated F-actin accumulation at the immunological synapse. May play a role in early contractile events in phagocytosis in macrophages. This Mus musculus (Mouse) protein is CDC42 small effector protein 1 (Cdc42se1).